Here is a 218-residue protein sequence, read N- to C-terminus: Ribose-5-phosphate isomerase A (218 aa).

Substrate is bound by residues 28–31 (TGST), 81–84 (DGAD), and 94–97 (KGGG). The active-site Proton acceptor is the glutamate 103. Lysine 121 provides a ligand contact to substrate.

This sequence belongs to the ribose 5-phosphate isomerase family. As to quaternary structure, homodimer.

It carries out the reaction aldehydo-D-ribose 5-phosphate = D-ribulose 5-phosphate. Its pathway is carbohydrate degradation; pentose phosphate pathway; D-ribose 5-phosphate from D-ribulose 5-phosphate (non-oxidative stage): step 1/1. Catalyzes the reversible conversion of ribose-5-phosphate to ribulose 5-phosphate. The chain is Ribose-5-phosphate isomerase A from Sodalis glossinidius (strain morsitans).